The sequence spans 329 residues: Putative ubiquitin thioesterase otu1 (329 aa).

Residues 7–89 (RLKYENQSAV…ATSFSTNEPA (83 aa)) are UBX-like. Positions 85–127 (TNEPAKPPIPNAATKPTFPPQTEISNPPAVSHQSKNTSQDPPY) are disordered. Positions 115-124 (SHQSKNTSQD) are enriched in polar residues. The OTU domain maps to 135–254 (IALRVMPDDN…GIHYDLAALA (120 aa)). The interval 140-146 (MPDDNSC) is cys-loop. Asp143 is a catalytic residue. Catalysis depends on Cys146, which acts as the Nucleophile. Residues 193–203 (IRKETSWGGYI) form a variable-loop region. The segment at 243-247 (YSGIH) is his-loop. Ile246 contributes to the substrate binding site. His247 is an active-site residue. Residues 272–277 (VTITPY) form an S2 site region. Residues 299 to 323 (IRCTICGTGLVGEKDATAHALATGH) form a C2H2-type zinc finger. His323 is a catalytic residue.

The protein resides in the cytoplasm. It is found in the nucleus. It carries out the reaction Thiol-dependent hydrolysis of ester, thioester, amide, peptide and isopeptide bonds formed by the C-terminal Gly of ubiquitin (a 76-residue protein attached to proteins as an intracellular targeting signal).. Its function is as follows. Hydrolase that can remove conjugated ubiquitin from proteins and may therefore play an important regulatory role at the level of protein turnover by preventing degradation. Has a role in meiosis. This is Putative ubiquitin thioesterase otu1 (otu1) from Schizosaccharomyces pombe (strain 972 / ATCC 24843) (Fission yeast).